A 270-amino-acid chain; its full sequence is Mediator of RNA polymerase II transcription subunit 4 (270 aa).

The disordered stretch occupies residues 1–22 (MAASSSGEKEKERLGGGLGVAG). An N-acetylalanine modification is found at Ala-2. Coiled-coil stretches lie at residues 24–48 (NSTRERLLSALEDLEVLSRELIEML) and 90–131 (HHEM…AKEK). Residue Ser-32 is modified to Phosphoserine. Residues 226-270 (DMSMNMLPPNHSSDFLLEPPGHNKENEDDVEIMSTDSSSSSSESD) are disordered. The segment covering 259 to 270 (STDSSSSSSESD) has biased composition (low complexity).

It belongs to the Mediator complex subunit 4 family. In terms of assembly, component of the Mediator complex, which is composed of MED1, MED4, MED6, MED7, MED8, MED9, MED10, MED11, MED12, MED13, MED13L, MED14, MED15, MED16, MED17, MED18, MED19, MED20, MED21, MED22, MED23, MED24, MED25, MED26, MED27, MED29, MED30, MED31, CCNC, CDK8 and CDC2L6/CDK11. The MED12, MED13, CCNC and CDK8 subunits form a distinct module termed the CDK8 module. Mediator containing the CDK8 module is less active than Mediator lacking this module in supporting transcriptional activation. Individual preparations of the Mediator complex lacking one or more distinct subunits have been variously termed ARC, CRSP, DRIP, PC2, SMCC and TRAP.

It is found in the nucleus. Component of the Mediator complex, a coactivator involved in the regulated transcription of nearly all RNA polymerase II-dependent genes. Mediator functions as a bridge to convey information from gene-specific regulatory proteins to the basal RNA polymerase II transcription machinery. Mediator is recruited to promoters by direct interactions with regulatory proteins and serves as a scaffold for the assembly of a functional preinitiation complex with RNA polymerase II and the general transcription factors. In Homo sapiens (Human), this protein is Mediator of RNA polymerase II transcription subunit 4 (MED4).